We begin with the raw amino-acid sequence, 428 residues long: Serine--tRNA ligase (428 aa).

234-236 (TAE) is an L-serine binding site. 265–267 (RRE) provides a ligand contact to ATP. Glutamate 288 contributes to the L-serine binding site. ATP is bound at residue 352–355 (EISS). Serine 388 contacts L-serine.

Belongs to the class-II aminoacyl-tRNA synthetase family. Type-1 seryl-tRNA synthetase subfamily. Homodimer. The tRNA molecule binds across the dimer.

The protein resides in the cytoplasm. The catalysed reaction is tRNA(Ser) + L-serine + ATP = L-seryl-tRNA(Ser) + AMP + diphosphate + H(+). It catalyses the reaction tRNA(Sec) + L-serine + ATP = L-seryl-tRNA(Sec) + AMP + diphosphate + H(+). It functions in the pathway aminoacyl-tRNA biosynthesis; selenocysteinyl-tRNA(Sec) biosynthesis; L-seryl-tRNA(Sec) from L-serine and tRNA(Sec): step 1/1. In terms of biological role, catalyzes the attachment of serine to tRNA(Ser). Is also able to aminoacylate tRNA(Sec) with serine, to form the misacylated tRNA L-seryl-tRNA(Sec), which will be further converted into selenocysteinyl-tRNA(Sec). The polypeptide is Serine--tRNA ligase (Synechococcus elongatus (strain ATCC 33912 / PCC 7942 / FACHB-805) (Anacystis nidulans R2)).